An 83-amino-acid polypeptide reads, in one-letter code: U1-theraphotoxin-Hs1f (83 aa).

Positions 1 to 21 are cleaved as a signal peptide; it reads MKVTLIAILTCAAVLVLHTTA. The propeptide occupies 22-48; the sequence is AEELEESQLMEVGMPDTELAAVDEERL. 3 cysteine pairs are disulfide-bonded: Cys51–Cys64, Cys55–Cys75, and Cys69–Cys80.

The protein belongs to the neurotoxin 12 (Hwtx-2) family. 02 (Hwtx-2) subfamily. In terms of tissue distribution, expressed by the venom gland.

The protein resides in the secreted. In terms of biological role, lethal neurotoxin that blocks neuromuscular transmission. The polypeptide is U1-theraphotoxin-Hs1f (Cyriopagopus schmidti (Chinese bird spider)).